The primary structure comprises 62 residues: Phycobilisome degradation protein NblA homolog 1 (62 aa).

It to Synechococcus PCC 7942 NblA and some, to chloroplast ycf18.

The protein is Phycobilisome degradation protein NblA homolog 1 of Synechocystis sp. (strain ATCC 27184 / PCC 6803 / Kazusa).